The following is a 764-amino-acid chain: MDHLNEATQGKEHSEMSNNVSDPKGPPAKIARLEQNGSPLGRGRLGSTGGKMQGVPLKHSGHLMKTNLRKGTMLPVFCVVEHYENAIEYDCKEEHAEFVLVRKDMLFNQLIEMALLSLGYSHSSAAQAKGLIQVGKWNPVPLSYVTDAPDATVADMLQDVYHVVTLKIQLHSCPKLEDLPPEQWSHTTVRNALKDLLKDMNQSSLAKECPLSQSMISSIVNSTYYANVSAAKCQEFGRWYKHFKKTKDMMVEMDSLSELSQQGANHVNFGQQPVPGNTAEQPPSPAQLSHGSQPSVRTPLPNLHPGLVSTPISPQLVNQQLVMAQLLNQQYAVNRLLAQQSLNQQYLNHPPPVSRSMNKPLEQQVSTNTEVSSEIYQWVRDELKRAGISQAVFARVAFNRTQGLLSEILRKEEDPKTASQSLLVNLRAMQNFLQLPEAERDRIYQDERERSLNAASAMGPAPLLSTPPSRPPQVKTATLATERNGKPENNTMNINASIYDEIQQEMKRAKVSQALFAKVAATKSQGWLCELLRWKEDPSPENRTLWENLSMIRRFLSLPQPERDAIYEQESNAVHHHGDRPPHIIHVPAEQIQQQQQQQQQQQQQQQPPPPPPQPQPQPQAGPRLPPRQPTVASSAESDEENRQKTRPRTKISVEALGILQSFIQDVGLYPDEEAIQTLSAQLDLPKYTIIKFFQNQRYYLKHHGKLKDNSGLEVDVAEYKDEELLKDLEESVQDKNANTLFSVKLEEELSVEGSTDVNADLKD.

Over residues 1–15 (MDHLNEATQGKEHSE) the composition is skewed to basic and acidic residues. The tract at residues 1–56 (MDHLNEATQGKEHSEMSNNVSDPKGPPAKIARLEQNGSPLGRGRLGSTGGKMQGVP) is disordered. Residues 20–40 (VSDPKGPPAKIARLEQNGSPL) carry the Nuclear localization signal motif. The segment covering 43–52 (GRLGSTGGKM) has biased composition (gly residues). Residue lysine 51 forms a Glycyl lysine isopeptide (Lys-Gly) (interchain with G-Cter in SUMO2) linkage. Positions 71 to 172 (GTMLPVFCVV…VVTLKIQLHS (102 aa)) constitute a CMP domain. An N6-acetyllysine modification is found at lysine 136. The Protein interaction signature appears at 139-143 (PVPLS). The 74-residue stretch at 175 to 248 (KLEDLPPEQW…WYKHFKKTKD (74 aa)) folds into the CUTL domain. Serine 185 carries the phosphoserine modification. The interval 224–278 (YYANVSAAKCQEFGRWYKHFKKTKDMMVEMDSLSELSQQGANHVNFGQQPVPGNT) is nuclear matrix targeting sequence (NMTS). The Nuclear matrix targeting sequence (NMTS) motif lies at 224 to 278 (YYANVSAAKCQEFGRWYKHFKKTKDMMVEMDSLSELSQQGANHVNFGQQPVPGNT). Polar residues predominate over residues 266–296 (HVNFGQQPVPGNTAEQPPSPAQLSHGSQPSV). Residues 266–307 (HVNFGQQPVPGNTAEQPPSPAQLSHGSQPSVRTPLPNLHPGL) form a disordered region. The CUT 1 DNA-binding region spans 361 to 448 (LEQQVSTNTE…ERDRIYQDER (88 aa)). DNA is bound by residues glutamine 390, 400–410 (RTQGLLSEILR), and asparagine 425. The tract at residues 450–474 (RSLNAASAMGPAPLLSTPPSRPPQV) is disordered. Positions 484–571 (NGKPENNTMN…ERDAIYEQES (88 aa)) form a DNA-binding region, CUT 2. Residues 591–650 (QIQQQQQQQQQQQQQQQPPPPPPQPQPQPQAGPRLPPRQPTVASSAESDEENRQKTRPRT) form a disordered region. Over residues 593-606 (QQQQQQQQQQQQQQ) the composition is skewed to low complexity. The segment covering 607–629 (QPPPPPPQPQPQPQAGPRLPPRQ) has biased composition (pro residues). At serine 638 the chain carries Phosphoserine. A DNA-binding region (homeobox) is located at residues 646–705 (TRPRTKISVEALGILQSFIQDVGLYPDEEAIQTLSAQLDLPKYTIIKFFQNQRYYLKHHG). A Glycyl lysine isopeptide (Lys-Gly) (interchain with G-Cter in SUMO) cross-link involves residue lysine 745.

Belongs to the CUT homeobox family. Interacts with PCAF. Interacts with sumoylated PML and HDAC1 Tat via the CMP domain. Also interacts with DYNLT3 and POLR2J2. Binds to EP300. Homodimer. Part of the nuclear protein complex gamma-globin promoter and enhancer binding factor (gamma-PE) composed at least of SATB1 and HOXB2. Interaction with CtBP1 when not acetylated stabilizes attachment to DNA and promotes transcription repression. Interacts with CUX1 (via DNA-binding domains); the interaction inhibits the attachment of both proteins to DNA. Sumoylated. Sumoylation promotes cleavage by caspases. Post-translationally, phosphorylated by PKC. Acetylated by PCAF. Phosphorylated form interacts with HDAC1, but unphosphorylated form interacts with PCAF. DNA binding properties are activated by phosphorylation and inactivated by acetylation. In opposition, gene expression is down-regulated by phosphorylation but up-regulated by acetylation. In terms of processing, cleaved at Asp-254 by caspase-3 and caspase-6 during T-cell apoptosis in thymus and during B-cell stimulation. The cleaved forms cannot dimerize and lose transcription regulation function because of impaired DNA and chromatin association. Expressed in the subventricular zone, rostral migratory stream and in the olfactory bulb (at protein level). Mainly expressed in thymus, spleen, and lymph nodes with a lower level observed in the brain.

The protein resides in the nucleus. Its subcellular location is the PML body. Its function is as follows. Required for the switching of fetal globin species, and beta- and gamma-globin genes regulation during erythroid differentiation. Plays a role in chromatin organization and nuclear architecture during apoptosis. Crucial silencing factor contributing to the initiation of X inactivation mediated by Xist RNA that occurs during embryogenesis and in lymphoma. Binds to DNA at special AT-rich sequences, the consensus SATB1-binding sequence (CSBS), at nuclear matrix- or scaffold-associated regions. Thought to recognize the sugar-phosphate structure of double-stranded DNA. Transcriptional repressor controlling nuclear and viral gene expression in a phosphorylated and acetylated status-dependent manner, by binding to matrix attachment regions (MARs) of DNA and inducing a local chromatin-loop remodeling. Acts as a docking site for several chromatin remodeling enzymes and also by recruiting corepressors (HDACs) or coactivators (HATs) directly to promoters and enhancers. Modulates genes that are essential in the maturation of the immune T-cell CD8SP from thymocytes. Promotes neuronal differentiation of neural stem/progenitor cells in the adult subventricular zone, possibly by positively regulating the expression of NEUROD1. This is DNA-binding protein SATB1 (Satb1) from Mus musculus (Mouse).